Here is a 1106-residue protein sequence, read N- to C-terminus: Putative pre-mRNA-splicing factor ATP-dependent RNA helicase DHX16 (1106 aa).

3 disordered regions span residues 73–100, 120–286, and 366–394; these read KIQN…DKEK, DDIV…TKSR, and YIND…WEQN. Residues 78 to 94 are compositionally biased toward low complexity; that stretch reads TSSSSSSSSTSLSSSSS. The segment covering 138–155 has biased composition (basic residues); the sequence is KRKKKEKKKEKKDKKDKK. Basic and acidic residues predominate over residues 156–167; it reads DKKSSTRKKSDN. Over residues 189–201 the composition is skewed to low complexity; sequence NNENNDNNNDNNN. The segment covering 232 to 283 has biased composition (basic and acidic residues); it reads REQREVKELSDRIKKRDEKSTKKKIVDDSETKESIERKNRLEQNEQLETERT. The 164-residue stretch at 477 to 640 folds into the Helicase ATP-binding domain; that stretch reads IDAVREYQVL…FDGAPTFNIP (164 aa). 490–497 serves as a coordination point for ATP; sequence GETGSGKT. A DEAH box motif is present at residues 587–590; that stretch reads DEAH. The Helicase C-terminal domain occupies 665 to 838; sequence TVLQIHITEP…NVVLLLKSMG (174 aa).

This sequence belongs to the DEAD box helicase family. DEAH subfamily. DDX16/PRP8 sub-subfamily. In terms of assembly, component of pre-catalytic spliceosome complexes.

The protein localises to the nucleus. The protein resides in the nucleoplasm. The catalysed reaction is ATP + H2O = ADP + phosphate + H(+). Required for pre-mRNA splicing as component of the spliceosome. Contributes to pre-mRNA splicing after spliceosome formation and prior to the first transesterification reaction. This chain is Putative pre-mRNA-splicing factor ATP-dependent RNA helicase DHX16 (dhx16), found in Dictyostelium discoideum (Social amoeba).